Here is a 151-residue protein sequence, read N- to C-terminus: 3-dehydroquinate dehydratase (151 aa).

Residue Y26 is the Proton acceptor of the active site. Positions 75, 81, and 88 each coordinate substrate. H101 serves as the catalytic Proton donor. Substrate-binding positions include 102-103 (LS) and R112.

The protein belongs to the type-II 3-dehydroquinase family. Homododecamer.

The catalysed reaction is 3-dehydroquinate = 3-dehydroshikimate + H2O. The protein operates within metabolic intermediate biosynthesis; chorismate biosynthesis; chorismate from D-erythrose 4-phosphate and phosphoenolpyruvate: step 3/7. Its function is as follows. Catalyzes a trans-dehydration via an enolate intermediate. The protein is 3-dehydroquinate dehydratase of Shewanella sediminis (strain HAW-EB3).